The following is a 373-amino-acid chain: Phosphoserine aminotransferase (373 aa).

Arginine 41 contacts L-glutamate. Residues glycine 75–threonine 76, tryptophan 101, threonine 152, aspartate 172, and glutamine 195 each bind pyridoxal 5'-phosphate. Lysine 196 is modified (N6-(pyridoxal phosphate)lysine). Asparagine 236–threonine 237 lines the pyridoxal 5'-phosphate pocket.

The protein belongs to the class-V pyridoxal-phosphate-dependent aminotransferase family. SerC subfamily. As to quaternary structure, homodimer. Pyridoxal 5'-phosphate serves as cofactor.

It is found in the cytoplasm. It carries out the reaction O-phospho-L-serine + 2-oxoglutarate = 3-phosphooxypyruvate + L-glutamate. It catalyses the reaction 4-(phosphooxy)-L-threonine + 2-oxoglutarate = (R)-3-hydroxy-2-oxo-4-phosphooxybutanoate + L-glutamate. The protein operates within amino-acid biosynthesis; L-serine biosynthesis; L-serine from 3-phospho-D-glycerate: step 2/3. Catalyzes the reversible conversion of 3-phosphohydroxypyruvate to phosphoserine and of 3-hydroxy-2-oxo-4-phosphonooxybutanoate to phosphohydroxythreonine. This is Phosphoserine aminotransferase from Lactobacillus helveticus (strain DPC 4571).